The chain runs to 317 residues: Probable cell division protein WhiA (317 aa).

A DNA-binding region (H-T-H motif) is located at residues S275 to E308.

It belongs to the WhiA family.

In terms of biological role, involved in cell division and chromosome segregation. The protein is Probable cell division protein WhiA of Desulfitobacterium hafniense (strain DSM 10664 / DCB-2).